A 248-amino-acid chain; its full sequence is Mannose-binding protein C (248 aa).

The signal sequence occupies residues methionine 1–serine 20. Residues isoleucine 36 to arginine 112 are disordered. The Collagen-like domain occupies glycine 42–alanine 99. Proline 47 is subject to 4-hydroxyproline. The segment covering lysine 49–glutamate 61 has biased composition (basic and acidic residues). Residues proline 73, proline 79, proline 82, and proline 88 each carry the 4-hydroxyproline modification. Residues arginine 112–leucine 130 adopt a coiled-coil conformation. One can recognise a C-type lectin domain in the interval valine 134 to glutamate 245. 2 cysteine pairs are disulfide-bonded: cysteine 155/cysteine 244 and cysteine 222/cysteine 236.

Oligomeric complex of 3 or more homotrimers. Interacts with MASP1 and MASP2. Interacts with MEP1A and MEP1B and may inhibit their catalytic activity. Hydroxylation on proline residues within the sequence motif, GXPG, is most likely to be 4-hydroxy as this fits the requirement for 4-hydroxylation in vertebrates.

It is found in the secreted. In terms of biological role, calcium-dependent lectin involved in innate immune defense. Binds mannose, fucose and N-acetylglucosamine on different microorganisms and activates the lectin complement pathway. Binds to late apoptotic cells, as well as to apoptotic blebs and to necrotic cells, but not to early apoptotic cells, facilitating their uptake by macrophages. The polypeptide is Mannose-binding protein C (MBL2) (Saguinus oedipus (Cotton-top tamarin)).